The chain runs to 159 residues: LOB domain-containing protein 25 (159 aa).

The 102-residue stretch at 38–139 (SPCAACKFLR…RELEETNADL (102 aa)) folds into the LOB domain.

It belongs to the LOB domain-containing protein family. Expressed in young shoots, roots, stems, leaves and flowers.

In Arabidopsis thaliana (Mouse-ear cress), this protein is LOB domain-containing protein 25 (LBD25).